The sequence spans 92 residues: Small ribosomal subunit protein uS19 (92 aa).

The protein belongs to the universal ribosomal protein uS19 family.

In terms of biological role, protein S19 forms a complex with S13 that binds strongly to the 16S ribosomal RNA. This chain is Small ribosomal subunit protein uS19, found in Methylobacterium nodulans (strain LMG 21967 / CNCM I-2342 / ORS 2060).